The following is a 96-amino-acid chain: Co-chaperonin GroES (96 aa).

Belongs to the GroES chaperonin family. In terms of assembly, heptamer of 7 subunits arranged in a ring. Interacts with the chaperonin GroEL.

It localises to the cytoplasm. In terms of biological role, together with the chaperonin GroEL, plays an essential role in assisting protein folding. The GroEL-GroES system forms a nano-cage that allows encapsulation of the non-native substrate proteins and provides a physical environment optimized to promote and accelerate protein folding. GroES binds to the apical surface of the GroEL ring, thereby capping the opening of the GroEL channel. This Neisseria meningitidis serogroup B (strain ATCC BAA-335 / MC58) protein is Co-chaperonin GroES.